The sequence spans 186 residues: TATA box-binding protein-like 1 (186 aa).

It belongs to the TBP family.

It localises to the cytoplasm. The protein resides in the nucleus. In terms of biological role, part of a specialized transcription system that mediates the transcription of most ribosomal proteins through the 5'-TCT-3' motif which is a core promoter element at these genes. Seems to also mediate the transcription of NF1. Does not bind the TATA box. Members of the TBP family are differentially required to regulate transcription and development during early embryogenesis. Particularly regulates genes that have a role in catabolism. The polypeptide is TATA box-binding protein-like 1 (tbpl1) (Xenopus tropicalis (Western clawed frog)).